The sequence spans 249 residues: UPF0246 protein Lreu_0493 (249 aa).

The protein belongs to the UPF0246 family.

This chain is UPF0246 protein Lreu_0493, found in Limosilactobacillus reuteri (strain DSM 20016) (Lactobacillus reuteri).